The chain runs to 1464 residues: DNA polymerase III PolC-type (1464 aa).

The region spanning 426–582 (YVVFDVETTG…YDAEATGRLL (157 aa)) is the Exonuclease domain.

The protein belongs to the DNA polymerase type-C family. PolC subfamily.

It is found in the cytoplasm. The catalysed reaction is DNA(n) + a 2'-deoxyribonucleoside 5'-triphosphate = DNA(n+1) + diphosphate. Functionally, required for replicative DNA synthesis. This DNA polymerase also exhibits 3' to 5' exonuclease activity. In Streptococcus thermophilus (strain CNRZ 1066), this protein is DNA polymerase III PolC-type.